Consider the following 186-residue polypeptide: Elongation factor P (186 aa).

It belongs to the elongation factor P family.

The protein localises to the cytoplasm. The protein operates within protein biosynthesis; polypeptide chain elongation. Functionally, involved in peptide bond synthesis. Stimulates efficient translation and peptide-bond synthesis on native or reconstituted 70S ribosomes in vitro. Probably functions indirectly by altering the affinity of the ribosome for aminoacyl-tRNA, thus increasing their reactivity as acceptors for peptidyl transferase. This is Elongation factor P from Brucella ovis (strain ATCC 25840 / 63/290 / NCTC 10512).